A 395-amino-acid chain; its full sequence is Fe(3+) ions import ATP-binding protein FbpC 2 (395 aa).

Residues 1-21 (MHIAQELADETCNSPRGAGHA) form a disordered region. The region spanning 23–264 (LRYPSDRRTA…PKTLFVADFI (242 aa)) is the ABC transporter domain. 66–73 (GPSGCGKT) provides a ligand contact to ATP.

Belongs to the ABC transporter superfamily. Fe(3+) ion importer (TC 3.A.1.10) family. In terms of assembly, the complex is composed of two ATP-binding proteins (FbpC), two transmembrane proteins (FbpB) and a solute-binding protein (FbpA).

The protein resides in the cell inner membrane. It carries out the reaction Fe(3+)(out) + ATP + H2O = Fe(3+)(in) + ADP + phosphate + H(+). Its function is as follows. Part of the ABC transporter complex FbpABC involved in Fe(3+) ions import. Responsible for energy coupling to the transport system. The protein is Fe(3+) ions import ATP-binding protein FbpC 2 of Rhizobium meliloti (strain 1021) (Ensifer meliloti).